We begin with the raw amino-acid sequence, 260 residues long: 3'-5' ssDNA/RNA exonuclease TatD (260 aa).

The a divalent metal cation site is built by glutamate 92, histidine 128, and histidine 153.

It belongs to the metallo-dependent hydrolases superfamily. TatD-type hydrolase family. TatD subfamily. In terms of assembly, monomer. Requires Mg(2+) as cofactor.

It localises to the cytoplasm. In terms of biological role, 3'-5' exonuclease that prefers single-stranded DNA and RNA. May play a role in the H(2)O(2)-induced DNA damage repair. The sequence is that of 3'-5' ssDNA/RNA exonuclease TatD from Edwardsiella piscicida.